Consider the following 575-residue polypeptide: Phosphoenolpyruvate-protein phosphotransferase (575 aa).

His191 (tele-phosphohistidine intermediate) is an active-site residue. Residues Arg298 and Arg334 each coordinate phosphoenolpyruvate. Mg(2+) contacts are provided by Glu435 and Asp459. Residues 458-459 (ND) and Arg469 each bind phosphoenolpyruvate. Catalysis depends on Cys506, which acts as the Proton donor.

It belongs to the PEP-utilizing enzyme family. As to quaternary structure, homodimer. Mg(2+) serves as cofactor.

Its subcellular location is the cytoplasm. It catalyses the reaction L-histidyl-[protein] + phosphoenolpyruvate = N(pros)-phospho-L-histidyl-[protein] + pyruvate. Its function is as follows. General (non sugar-specific) component of the phosphoenolpyruvate-dependent sugar phosphotransferase system (sugar PTS). This major carbohydrate active-transport system catalyzes the phosphorylation of incoming sugar substrates concomitantly with their translocation across the cell membrane. Enzyme I transfers the phosphoryl group from phosphoenolpyruvate (PEP) to the phosphoryl carrier protein (HPr). This Lactococcus lactis subsp. lactis (strain IL1403) (Streptococcus lactis) protein is Phosphoenolpyruvate-protein phosphotransferase (ptsI).